Reading from the N-terminus, the 341-residue chain is S-adenosylmethionine:tRNA ribosyltransferase-isomerase (341 aa).

It belongs to the QueA family. As to quaternary structure, monomer.

It localises to the cytoplasm. It carries out the reaction 7-aminomethyl-7-carbaguanosine(34) in tRNA + S-adenosyl-L-methionine = epoxyqueuosine(34) in tRNA + adenine + L-methionine + 2 H(+). It functions in the pathway tRNA modification; tRNA-queuosine biosynthesis. Functionally, transfers and isomerizes the ribose moiety from AdoMet to the 7-aminomethyl group of 7-deazaguanine (preQ1-tRNA) to give epoxyqueuosine (oQ-tRNA). In Staphylococcus epidermidis (strain ATCC 35984 / DSM 28319 / BCRC 17069 / CCUG 31568 / BM 3577 / RP62A), this protein is S-adenosylmethionine:tRNA ribosyltransferase-isomerase.